Consider the following 145-residue polypeptide: KDDIERMVKEAESYKEEDDKQRDRIAAKNSLEGYAFQMKATLDEEAIKSKVSEEDRKKILDKVDEVLKWLDANALAEKDEFEHQRKELESVCNPIITKLYQQAGGAGAGGMPGGFPGGFPGTDGSGGGAAGGDGGKSGPTIEEVD.

Disordered stretches follow at residues 1 to 21 (KDDI…DDKQ) and 103 to 145 (AGGA…EEVD). Over residues 104–137 (GGAGAGGMPGGFPGGFPGTDGSGGGAAGGDGGKS) the composition is skewed to gly residues.

Belongs to the heat shock protein 70 family.

This Dermatophagoides farinae (American house dust mite) protein is Allergen MAG29 (MAG29).